The following is a 428-amino-acid chain: Adenylosuccinate synthetase, chloroplastic (428 aa).

Residues 17-23 (GDEGKGK) and 45-47 (GHT) contribute to the GTP site. Aspartate 18 serves as the catalytic Proton acceptor. The Mg(2+) site is built by aspartate 18 and glycine 45. IMP contacts are provided by residues 18-21 (DEGK), 43-46 (NAGH), threonine 135, arginine 149, asparagine 226, threonine 241, and arginine 305. Catalysis depends on histidine 46, which acts as the Proton donor. Position 301–307 (301–307 (TTTGRPR)) interacts with substrate. Residues arginine 307, 333–335 (KLD), and 416–418 (GVG) contribute to the GTP site.

This sequence belongs to the adenylosuccinate synthetase family. Homodimer. Mg(2+) is required as a cofactor.

Its subcellular location is the plastid. The protein resides in the chloroplast. It catalyses the reaction IMP + L-aspartate + GTP = N(6)-(1,2-dicarboxyethyl)-AMP + GDP + phosphate + 2 H(+). It participates in purine metabolism; AMP biosynthesis via de novo pathway; AMP from IMP: step 1/2. Functionally, plays an important role in the de novo pathway and in the salvage pathway of purine nucleotide biosynthesis. Catalyzes the first committed step in the biosynthesis of AMP from IMP. This chain is Adenylosuccinate synthetase, chloroplastic, found in Ostreococcus lucimarinus (strain CCE9901).